Reading from the N-terminus, the 500-residue chain is ATP synthase subunit alpha, sodium ion specific (500 aa).

169–176 (GDRQTGKT) lines the ATP pocket.

It belongs to the ATPase alpha/beta chains family. As to quaternary structure, F-type ATPases have 2 components, CF(1) - the catalytic core - and CF(0) - the membrane proton channel. CF(1) has five subunits: alpha(3), beta(3), gamma(1), delta(1), epsilon(1). CF(0) has three main subunits: a, b and c.

Its subcellular location is the cell membrane. It carries out the reaction 4 Na(+)(in) + ATP + H2O = 4 Na(+)(out) + ADP + phosphate + H(+). Produces ATP from ADP in the presence of a sodium ion gradient across the membrane. The alpha chain is a regulatory subunit. The protein is ATP synthase subunit alpha, sodium ion specific of Propionigenium modestum.